The chain runs to 347 residues: GTPase Obg (347 aa).

An Obg domain is found at 1 to 159; the sequence is MQFLDQAKIY…AWVWLRLKLL (159 aa). The interval 124 to 144 is disordered; it reads GRGNASYKSSTNRAPRQHGPG. Positions 160–327 constitute an OBG-type G domain; it reads ADVGLVGLPN…ILDQLITMTG (168 aa). GTP-binding positions include 166 to 173, 191 to 195, 212 to 215, 279 to 282, and 308 to 310; these read GLPNAGKS, FTTLH, DIPG, NKID, and SGA. Positions 173 and 193 each coordinate Mg(2+).

It belongs to the TRAFAC class OBG-HflX-like GTPase superfamily. OBG GTPase family. Monomer. It depends on Mg(2+) as a cofactor.

It is found in the cytoplasm. Functionally, an essential GTPase which binds GTP, GDP and possibly (p)ppGpp with moderate affinity, with high nucleotide exchange rates and a fairly low GTP hydrolysis rate. Plays a role in control of the cell cycle, stress response, ribosome biogenesis and in those bacteria that undergo differentiation, in morphogenesis control. In Zymomonas mobilis subsp. mobilis (strain ATCC 31821 / ZM4 / CP4), this protein is GTPase Obg.